Consider the following 218-residue polypeptide: 4-coumaroyl-homoserine lactone synthase (218 aa).

It belongs to the autoinducer synthase family.

It carries out the reaction 4-coumaroyl-CoA + S-adenosyl-L-methionine = N-(4-coumaroyl)-L-homoserine lactone + S-methyl-5'-thioadenosine + CoA + H(+). Its function is as follows. Catalyzes the synthesis of 4-coumaroyl-homoserine lactone, a quorum-sensing (QS) autoinducer molecule which binds to RpaR transcriptional regulator to regulate expression of QS-dependent genes. This chain is 4-coumaroyl-homoserine lactone synthase, found in Rhodopseudomonas palustris (strain ATCC BAA-98 / CGA009).